The primary structure comprises 271 residues: Glutamate racemase (271 aa).

Substrate contacts are provided by residues 12 to 13 and 44 to 45; these read DS and YG. The active-site Proton donor/acceptor is Cys-75. 76–77 is a binding site for substrate; sequence NS. Cys-185 acts as the Proton donor/acceptor in catalysis. A substrate-binding site is contributed by 186–187; the sequence is TH.

Belongs to the aspartate/glutamate racemases family.

It carries out the reaction L-glutamate = D-glutamate. It participates in cell wall biogenesis; peptidoglycan biosynthesis. In terms of biological role, provides the (R)-glutamate required for cell wall biosynthesis. The sequence is that of Glutamate racemase from Mycobacterium bovis (strain BCG / Pasteur 1173P2).